Reading from the N-terminus, the 211-residue chain is Large ribosomal subunit protein uL3 (211 aa).

Position 150 is an N5-methylglutamine (glutamine 150).

It belongs to the universal ribosomal protein uL3 family. Part of the 50S ribosomal subunit. Forms a cluster with proteins L14 and L19. Methylated by PrmB.

One of the primary rRNA binding proteins, it binds directly near the 3'-end of the 23S rRNA, where it nucleates assembly of the 50S subunit. In Pseudomonas savastanoi pv. phaseolicola (strain 1448A / Race 6) (Pseudomonas syringae pv. phaseolicola (strain 1448A / Race 6)), this protein is Large ribosomal subunit protein uL3.